Here is a 677-residue protein sequence, read N- to C-terminus: Methionine--tRNA ligase (677 aa).

The short motif at 15–25 (PYANGSIHLGH) is the 'HIGH' region element. C146, C149, C159, and C162 together coordinate Zn(2+). Positions 333–337 (KMSKS) match the 'KMSKS' region motif. K336 is an ATP binding site. The region spanning 575–677 (DFAKVDLRVA…DGAKPGQQVK (103 aa)) is the tRNA-binding domain.

This sequence belongs to the class-I aminoacyl-tRNA synthetase family. MetG type 1 subfamily. As to quaternary structure, homodimer. Zn(2+) serves as cofactor.

It is found in the cytoplasm. The catalysed reaction is tRNA(Met) + L-methionine + ATP = L-methionyl-tRNA(Met) + AMP + diphosphate. Is required not only for elongation of protein synthesis but also for the initiation of all mRNA translation through initiator tRNA(fMet) aminoacylation. This Klebsiella pneumoniae (strain 342) protein is Methionine--tRNA ligase.